Reading from the N-terminus, the 84-residue chain is Putative antitoxin RelB4 (84 aa).

Antitoxin component of a type II toxin-antitoxin (TA) system. Its cognate toxin is RelE4 (Potential). The chain is Putative antitoxin RelB4 (relB4) from Methanocaldococcus jannaschii (strain ATCC 43067 / DSM 2661 / JAL-1 / JCM 10045 / NBRC 100440) (Methanococcus jannaschii).